Here is a 355-residue protein sequence, read N- to C-terminus: Chemerin-like receptor 2 (355 aa).

The Extracellular portion of the chain corresponds to 1–41 (MEDLEETLFEEFENYSYALDYYSLESDLEEKVQLGVVHWVS). N-linked (GlcNAc...) asparagine glycosylation is present at N14. Residues 42 to 62 (LVLYCLSFVLGIPGNAIVIWF) traverse the membrane as a helical segment. At 63-73 (TGFKWKKTVST) the chain is on the cytoplasmic side. A helical membrane pass occupies residues 74–94 (LWFLNLAIADFIFLLFLPLYI). The Extracellular segment spans residues 95–112 (SYVVMNFHWPFGIWLCKA). C110 and C187 are oxidised to a cystine. The chain crosses the membrane as a helical span at residues 113–133 (NSFTAQLNMFASVFFLTVISL). Residues 134 to 154 (DHYIHLIHPVLSHRHRTLKNS) lie on the Cytoplasmic side of the membrane. Residues 155 to 175 (LIVIIFIWLLASLIGGPALYF) form a helical membrane-spanning segment. Residues 176–210 (RDTVEFNNHTLCYNNFQKHDPDLTVIRHHVLTWVK) lie on the Extracellular side of the membrane. A helical transmembrane segment spans residues 211 to 231 (FIVGYLFPLLTMSICYLCLIF). Topologically, residues 232-247 (KVKKRSILISSRHFWT) are cytoplasmic. A helical transmembrane segment spans residues 248–268 (ILAVVVAFVVCWTPYHLFSIW). The Extracellular segment spans residues 269 to 286 (ELTIHHNSYSHHVMQAGI). Residues 287 to 307 (PLSTGLAFLNSCLNPILYVLI) traverse the membrane as a helical segment. Topologically, residues 308–355 (SKKFQARFRSSVAEILKYTLWEVSCSGTVSEQLRNSETKNLCLLETAQ) are cytoplasmic.

The protein belongs to the chemokine-like receptor (CMKLR) family.

The protein localises to the cell membrane. Its function is as follows. Receptor for chemoattractant adipokine chemerin/RARRES2 suggesting a role for this receptor in the regulation of inflammation and energy homesotasis. Signals mainly via beta-arrestin pathway. Binding of RARRES2 activates weakly G proteins, calcium mobilization and MAPK1/MAPK3 (ERK1/2) phosphorylation too. Acts also as a receptor for TAFA1, mediates its effects on neuronal stem-cell proliferation and differentiation via the activation of ROCK/ERK and ROCK/STAT3 signaling pathway. This Macaca mulatta (Rhesus macaque) protein is Chemerin-like receptor 2 (CMKLR2).